A 326-amino-acid chain; its full sequence is Gamma-resorcylate decarboxylase (326 aa).

Residues Glu8, His10, His164, and Asp287 each contribute to the Mn(2+) site. Asp287 is an active-site residue.

This sequence belongs to the metallo-dependent hydrolases superfamily. ACMSD family. In terms of assembly, homotetramer. Requires Mn(2+) as cofactor.

The enzyme catalyses 2,6-dihydroxybenzoate + H(+) = resorcinol + CO2. The catalysed reaction is 2,3-dihydroxybenzoate + H(+) = catechol + CO2. It participates in aromatic compound metabolism. Its activity is regulated as follows. Activity is inhibited by 2-nitroresorcinol (2-NR). Its function is as follows. Involved in the gamma-resorcylate (2,6-dihydroxybenzoate) catabolism. Catalyzes the reversible decarboxylation of gamma-resorcylate to resorcinol. Also catalyzes the decarboxylation of 2,3-dihydroxybenzoate to catechol, 2,4,6-trihydroxybenzoate to benzene-1,3,5-triol, and 2,6-dihydroxy-4-methylbenzoate to 5-methylbenzene-1,3-diol. This is Gamma-resorcylate decarboxylase from Polaromonas sp. (strain JS666 / ATCC BAA-500).